A 148-amino-acid chain; its full sequence is NADH-quinone oxidoreductase subunit K 2 (148 aa).

Helical transmembrane passes span 3-23, 28-48, and 64-84; these read LAYP…GVLA, ILVL…LVAF, and LFTI…VLAV. Positions 96–148 are disordered; sequence LRDTAETDAAETLPDDAGTGPSGTDAAPNGDTTTATGRPGDNAGKNKKAEATR.

This sequence belongs to the complex I subunit 4L family. NDH-1 is composed of 14 different subunits. Subunits NuoA, H, J, K, L, M, N constitute the membrane sector of the complex.

Its subcellular location is the cell membrane. The enzyme catalyses a quinone + NADH + 5 H(+)(in) = a quinol + NAD(+) + 4 H(+)(out). Its function is as follows. NDH-1 shuttles electrons from NADH, via FMN and iron-sulfur (Fe-S) centers, to quinones in the respiratory chain. The immediate electron acceptor for the enzyme in this species is believed to be a menaquinone. Couples the redox reaction to proton translocation (for every two electrons transferred, four hydrogen ions are translocated across the cytoplasmic membrane), and thus conserves the redox energy in a proton gradient. This chain is NADH-quinone oxidoreductase subunit K 2, found in Streptomyces griseus subsp. griseus (strain JCM 4626 / CBS 651.72 / NBRC 13350 / KCC S-0626 / ISP 5235).